Consider the following 640-residue polypeptide: 1-deoxy-D-xylulose-5-phosphate synthase (640 aa).

Thiamine diphosphate-binding positions include His-79 and 120-122 (AHS). Asp-151 is a binding site for Mg(2+). Thiamine diphosphate contacts are provided by residues 152–153 (GA), Asn-180, Tyr-289, and Glu-371. Asn-180 contacts Mg(2+).

It belongs to the transketolase family. DXPS subfamily. In terms of assembly, homodimer. It depends on Mg(2+) as a cofactor. The cofactor is thiamine diphosphate.

The enzyme catalyses D-glyceraldehyde 3-phosphate + pyruvate + H(+) = 1-deoxy-D-xylulose 5-phosphate + CO2. It participates in metabolic intermediate biosynthesis; 1-deoxy-D-xylulose 5-phosphate biosynthesis; 1-deoxy-D-xylulose 5-phosphate from D-glyceraldehyde 3-phosphate and pyruvate: step 1/1. Functionally, catalyzes the acyloin condensation reaction between C atoms 2 and 3 of pyruvate and glyceraldehyde 3-phosphate to yield 1-deoxy-D-xylulose-5-phosphate (DXP). This is 1-deoxy-D-xylulose-5-phosphate synthase from Novosphingobium aromaticivorans (strain ATCC 700278 / DSM 12444 / CCUG 56034 / CIP 105152 / NBRC 16084 / F199).